Consider the following 1218-residue polypeptide: NACHT, LRR and PYD domains-containing protein 1a allele 4 (1218 aa).

The segment covering 1-29 has biased composition (polar residues); that stretch reads MGESQSKQESNTRVAQHGSQQDVDPTFQT. 2 disordered regions span residues 1-44 and 71-91; these read MGES…QVEQ and EMDHESRRHSHQSKKKLDRSE. The span at 77 to 87 shows a compositional bias: basic residues; it reads RRHSHQSKKKL. Positions 175–484 constitute an NACHT domain; that stretch reads QLVIIEGAAG…EFFAAMSYIL (310 aa). Residue 181 to 188 participates in ATP binding; it reads GAAGIGKS. 3 LRR repeats span residues 343–364, 673–693, and 730–750; these read KERNTIIDFNLIGSIPVLLTLC, NLEELDLSGNPLSYSAVRSLC, and RLAELDLRLNDLGDNGVRQLC. Positions 799–815 are enriched in polar residues; it reads TMPTENTDGEESLTSSK. The disordered stretch occupies residues 799 to 842; it reads TMPTENTDGEESLTSSKQQQQQSGDKHMEPLGTDDDFWGPSGPV. Positions 835 to 968 are ZU5; that stretch reads FWGPSGPVST…HFAVLENPSF (134 aa). Residues 835-1118 enclose the FIIND domain; the sequence is FWGPSGPVST…LRPALPRMAS (284 aa). Residues 969–1118 form a UPA region; it reads SPMGVLLRMI…LRPALPRMAS (150 aa). The 90-residue stretch at 1122-1211 folds into the CARD domain; sequence DAPALLHFVD…HLIMDLLEKS (90 aa).

It belongs to the NLRP family. In terms of assembly, interacts (via LRR repeats) with BCL2 and BCL2L1 (via the loop between motifs BH4 and BH3). Interacts with NOD2; this interaction is enhanced in the presence of muramyl dipeptide (MDP) and increases IL1B release. Interacts with EIF2AK2/PKR; this interaction requires EIF2AK2 activity, is accompanied by EIF2AK2 autophosphorylation and promotes inflammasome assembly in response to danger-associated signals. Interacts with MEFV; this interaction targets Nlrp1a to degradation by autophagy, hence preventing excessive IL1B- and IL18-mediated inflammation. Interacts with DPP9; leading to inhibit activation of the inflammasome. DPP9 acts via formation of a ternary complex, composed of a DPP9 homodimer, one full-length NLRP1 protein, and one cleaved C-terminus of Nlrp1a (NACHT, LRR and PYD domains-containing protein 1a, C-terminus). Interacts with DPP8; leading to inhibit activation of the inflammasome, probably via formation of a ternary complex with DPP8. Interacts with the C-terminal part of Nlrp1a (NACHT, LRR and PYD domains-containing protein 1a, C-terminus) in absence of pathogens and other damage-associated signals. As to quaternary structure, interacts with the N-terminal part of Nlrp1a (NACHT, LRR and PYD domains-containing protein 1a, N-terminus) in absence of pathogens and other damage-associated signals. Homomultimer; forms the Nlrp1a inflammasome polymeric complex, a filament composed of homopolymers of this form in response to pathogens and other damage-associated signals. The Nlrp1a inflammasome polymeric complex directly recruits pro-caspase-1 (proCASP1) independently of PYCARD/ASC. Interacts (via CARD domain) with CASP1 (via CARD domain); leading to CASP1 activation. In terms of processing, autocatalytically cleaved. Autocatalytic cleavage in FIIND region occurs constitutively, prior to activation signals, and is required for inflammasome activity (IL1B release), possibly by facilitating CASP1 binding. Both N- and C-terminal parts remain associated non-covalently. Ubiquitinated in response to pathogen-associated signals, leading to its degradation by the proteasome and subsequent release of the cleaved C-terminal part of the protein (NACHT, LRR and PYD domains-containing protein 1a, C-terminus), which polymerizes and forms the Nlrp1a inflammasome.

The protein resides in the cytoplasm. Its subcellular location is the cytosol. It localises to the nucleus. The protein localises to the inflammasome. Its activity is regulated as follows. Activated by pathogens and other damage-associated signals: activation promotes ubiquitination and degradation of the N-terminal part, releasing the cleaved C-terminal part of the protein (NACHT, LRR and PYD domains-containing protein 1a, C-terminus), which polymerizes and forms the Nlrp1a inflammasome. Nlrp1a inflammasome is inhibited by DPP8 and DPP9, which sequester the C-terminal fragment of Nlrp1a (NACHT, LRR and PYD domains-containing protein 1a, C-terminus) in a ternary complex, thereby preventing Nlrp1a oligomerization and activation. Nlrp1a inflammasome is strongly activated by Val-boroPro (Talabostat, PT-100), an inhibitor of dipeptidyl peptidases DPP8 and DPP9. Val-boroPro relieves inhibition of DPP8 and/or DPP9 by promoting disruption of the ternary complex, releasing its C-terminal part from autoinhibition. Not activated by cleavage by B.anthracis lethal toxin (LT) endopeptidase. Its function is as follows. Acts as the sensor component of the Nlrp1a inflammasome, which mediates inflammasome activation in response to various pathogen-associated signals, leading to subsequent pyroptosis. Inflammasomes are supramolecular complexes that assemble in the cytosol in response to pathogens and other damage-associated signals and play critical roles in innate immunity and inflammation. Acts as a recognition receptor (PRR): recognizes specific pathogens and other damage-associated signals, such as Val-boroPro inhibitor, and mediates the formation of the inflammasome polymeric complex. In response to pathogen-associated signals, the N-terminal part of Nlrp1a is degraded by the proteasome, releasing the cleaved C-terminal part of the protein (NACHT, LRR and PYD domains-containing protein 1a, C-terminus), which polymerizes to initiate the formation of the inflammasome complex: the inflammasome directly recruits pro-caspase-1 (proCASP1) independently of PYCARD/ASC and promotes caspase-1 (CASP1) activation, which subsequently cleaves and activates inflammatory cytokines IL1B and IL18 and gasdermin-D (GSDMD), leading to pyroptosis. In the absence of GSDMD expression, the Nlrp1a inflammasome is able to recruit and activate CASP8, leading to activation of gasdermin-E (GSDME). Constitutes the precursor of the Nlrp1a inflammasome, which mediates autoproteolytic processing within the FIIND domain to generate the N-terminal and C-terminal parts, which are associated non-covalently in absence of pathogens and other damage-associated signals. In terms of biological role, regulatory part that prevents formation of the Nlrp1a inflammasome: in absence of pathogens and other damage-associated signals, interacts with the C-terminal part of Nlrp1a (NACHT, LRR and PYD domains-containing protein 1a, C-terminus), preventing activation of the Nlrp1a inflammasome. In response to pathogen-associated signals, this part is ubiquitinated by the N-end rule pathway and degraded by the proteasome, releasing the cleaved C-terminal part of the protein, which polymerizes and forms the Nlrp1a inflammasome. Functionally, constitutes the active part of the Nlrp1a inflammasome. In absence of pathogens and other damage-associated signals, interacts with the N-terminal part of Nlrp1a (NACHT, LRR and PYD domains-containing protein 1a, N-terminus), preventing activation of the Nlrp1a inflammasome. In response to pathogen-associated signals, the N-terminal part of Nlrp1a is degraded by the proteasome, releasing this form, which polymerizes to form the Nlrp1a inflammasome complex: the Nlrp1a inflammasome complex then directly recruits pro-caspase-1 (proCASP1) and promotes caspase-1 (CASP1) activation, leading to gasdermin-D (GSDMD) cleavage and subsequent pyroptosis. The protein is NACHT, LRR and PYD domains-containing protein 1a allele 4 of Rattus norvegicus (Rat).